A 485-amino-acid chain; its full sequence is Bifunctional protein GlmU (485 aa).

Residues 1–241 (MSASDFSSAV…ARELAGVNDR (241 aa)) are pyrophosphorylase. Residues 13 to 16 (LAAG), Lys27, Gln84, and 89 to 90 (GT) contribute to the UDP-N-acetyl-alpha-D-glucosamine site. Asp114 is a Mg(2+) binding site. Positions 151, 166, 181, and 239 each coordinate UDP-N-acetyl-alpha-D-glucosamine. Asn239 contributes to the Mg(2+) binding site. The linker stretch occupies residues 242-262 (VQLAEAGAELNRRTVIAAMRG). Residues 263–485 (GATIVDPATT…AAQNVHNQEG (223 aa)) form an N-acetyltransferase region. The UDP-N-acetyl-alpha-D-glucosamine site is built by Arg344 and Lys362. His374 serves as the catalytic Proton acceptor. 2 residues coordinate UDP-N-acetyl-alpha-D-glucosamine: Tyr377 and Asn388. Acetyl-CoA-binding positions include Ala391, 397–398 (NY), Ser416, and Ala434. Residues 465–485 (RPGTAAAQAAEAAQNVHNQEG) are disordered. Over residues 469–478 (AAAQAAEAAQ) the composition is skewed to low complexity.

The protein in the N-terminal section; belongs to the N-acetylglucosamine-1-phosphate uridyltransferase family. This sequence in the C-terminal section; belongs to the transferase hexapeptide repeat family. In terms of assembly, homotrimer. It depends on Mg(2+) as a cofactor.

The protein localises to the cytoplasm. The catalysed reaction is alpha-D-glucosamine 1-phosphate + acetyl-CoA = N-acetyl-alpha-D-glucosamine 1-phosphate + CoA + H(+). The enzyme catalyses N-acetyl-alpha-D-glucosamine 1-phosphate + UTP + H(+) = UDP-N-acetyl-alpha-D-glucosamine + diphosphate. It participates in nucleotide-sugar biosynthesis; UDP-N-acetyl-alpha-D-glucosamine biosynthesis; N-acetyl-alpha-D-glucosamine 1-phosphate from alpha-D-glucosamine 6-phosphate (route II): step 2/2. Its pathway is nucleotide-sugar biosynthesis; UDP-N-acetyl-alpha-D-glucosamine biosynthesis; UDP-N-acetyl-alpha-D-glucosamine from N-acetyl-alpha-D-glucosamine 1-phosphate: step 1/1. It functions in the pathway bacterial outer membrane biogenesis; LPS lipid A biosynthesis. Functionally, catalyzes the last two sequential reactions in the de novo biosynthetic pathway for UDP-N-acetylglucosamine (UDP-GlcNAc). The C-terminal domain catalyzes the transfer of acetyl group from acetyl coenzyme A to glucosamine-1-phosphate (GlcN-1-P) to produce N-acetylglucosamine-1-phosphate (GlcNAc-1-P), which is converted into UDP-GlcNAc by the transfer of uridine 5-monophosphate (from uridine 5-triphosphate), a reaction catalyzed by the N-terminal domain. This Corynebacterium glutamicum (strain ATCC 13032 / DSM 20300 / JCM 1318 / BCRC 11384 / CCUG 27702 / LMG 3730 / NBRC 12168 / NCIMB 10025 / NRRL B-2784 / 534) protein is Bifunctional protein GlmU.